Reading from the N-terminus, the 544-residue chain is pH-responsive protein 2 (544 aa).

Positions 1 to 22 (MLLKSLFPSILAATSFVSSVAA) are cleaved as a signal peptide. Residues Asn40 and Asn59 are each glycosylated (N-linked (GlcNAc...) asparagine). Cys72 and Cys101 are joined by a disulfide. N-linked (GlcNAc...) asparagine glycosylation occurs at Asn147. 5 cysteine pairs are disulfide-bonded: Cys214/Cys347, Cys232/Cys263, Cys369/Cys420, Cys378/Cys444, and Cys397/Cys402. The N-linked (GlcNAc...) asparagine glycan is linked to Asn408. The tract at residues 469–514 (GSSGLGTVSGTVRTDTSQSTSDSGSGSSSSSSSSSSSSSSGSSGSK) is disordered. The GPI-anchor amidated serine moiety is linked to residue Ser515. The propeptide at 516–544 (AASIVSVNLLTKIATIGISIVVGFGLITM) is removed in mature form.

This sequence belongs to the glycosyl hydrolase 72 family.

It is found in the cell membrane. Required for apical cell growth and plays an essential role in morphogenesis. May be integral to the pathogenic ability of the organism. This is pH-responsive protein 2 (PHR2) from Candida albicans (strain SC5314 / ATCC MYA-2876) (Yeast).